The chain runs to 37 residues: Photosystem I reaction center subunit VIII (37 aa).

The chain crosses the membrane as a helical span at residues 9 to 29 (SILVTLVGLVFPAFAMASLFL).

It belongs to the PsaI family.

Its subcellular location is the plastid. It localises to the chloroplast thylakoid membrane. Its function is as follows. May help in the organization of the PsaL subunit. This Pelargonium hortorum (Common geranium) protein is Photosystem I reaction center subunit VIII.